A 271-amino-acid polypeptide reads, in one-letter code: 3-methyl-2-oxobutanoate hydroxymethyltransferase (271 aa).

Mg(2+) is bound by residues Asp-53 and Asp-92. 3-methyl-2-oxobutanoate-binding positions include 53–54, Asp-92, and Lys-120; that span reads DS. Glu-122 is a binding site for Mg(2+). Catalysis depends on Glu-189, which acts as the Proton acceptor.

It belongs to the PanB family. Homodecamer; pentamer of dimers. Mg(2+) is required as a cofactor.

It localises to the cytoplasm. The catalysed reaction is 3-methyl-2-oxobutanoate + (6R)-5,10-methylene-5,6,7,8-tetrahydrofolate + H2O = 2-dehydropantoate + (6S)-5,6,7,8-tetrahydrofolate. It participates in cofactor biosynthesis; (R)-pantothenate biosynthesis; (R)-pantoate from 3-methyl-2-oxobutanoate: step 1/2. Functionally, catalyzes the reversible reaction in which hydroxymethyl group from 5,10-methylenetetrahydrofolate is transferred onto alpha-ketoisovalerate to form ketopantoate. This Paraburkholderia phymatum (strain DSM 17167 / CIP 108236 / LMG 21445 / STM815) (Burkholderia phymatum) protein is 3-methyl-2-oxobutanoate hydroxymethyltransferase.